Here is a 378-residue protein sequence, read N- to C-terminus: tRNA-specific 2-thiouridylase MnmA (378 aa).

Residues 9–16 (GVSGGVDS) and methionine 35 each bind ATP. The interaction with target base in tRNA stretch occupies residues 94 to 96 (NPD). The active-site Nucleophile is cysteine 99. An intrachain disulfide couples cysteine 99 to cysteine 195. Glycine 123 contacts ATP. Positions 145-147 (KDQ) are interaction with tRNA. The active-site Cysteine persulfide intermediate is cysteine 195. Residues 307–308 (RY) are interaction with tRNA.

This sequence belongs to the MnmA/TRMU family.

Its subcellular location is the cytoplasm. The catalysed reaction is S-sulfanyl-L-cysteinyl-[protein] + uridine(34) in tRNA + AH2 + ATP = 2-thiouridine(34) in tRNA + L-cysteinyl-[protein] + A + AMP + diphosphate + H(+). Functionally, catalyzes the 2-thiolation of uridine at the wobble position (U34) of tRNA, leading to the formation of s(2)U34. This Xanthomonas oryzae pv. oryzae (strain PXO99A) protein is tRNA-specific 2-thiouridylase MnmA.